The following is a 145-amino-acid chain: Peptide methionine sulfoxide reductase MsrB (145 aa).

One can recognise a MsrB domain in the interval 6-129 (EEELKQTLTD…NAAALRFVPV (124 aa)). The active-site Nucleophile is Cys-118.

Belongs to the MsrB Met sulfoxide reductase family.

The enzyme catalyses L-methionyl-[protein] + [thioredoxin]-disulfide + H2O = L-methionyl-(R)-S-oxide-[protein] + [thioredoxin]-dithiol. The sequence is that of Peptide methionine sulfoxide reductase MsrB from Enterococcus faecalis (strain ATCC 700802 / V583).